The chain runs to 249 residues: O-methyltransferase adaD (249 aa).

Residues 1–15 (MSSVTLTTTTTTTST) are compositionally biased toward low complexity. Residues 1-26 (MSSVTLTTTTTTTSTPPKPTPKDEPQ) are disordered.

This sequence belongs to the methyltransferase superfamily.

The enzyme catalyses 2-acetyl-3,4a,8,10,11,12a-hexahydroxy-1,4,4a,5,12,12a-hexahydrotetracene-1,12-dione + S-adenosyl-L-methionine = TAN-1612 + S-adenosyl-L-homocysteine + H(+). The protein operates within secondary metabolite biosynthesis. O-methyltransferase; part of the gene cluster that mediates the biosynthesis of the linear tetracyclic TAN-1612 neuropeptide Y receptor antagonist. The decaketide backbone of TAN-1612 is synthesized by the non-reducing polyketide synthase adaA via condensation of one acetyl-CoA starter unit with 9 malonyl-CoA units. The FAD-dependent monooxygenase adaC then performs hydroxylation at C2 while the polaketide chain is still attached to the NRPKS adaA. The alpha-hydroxylation step at C2 appears to be crucial for the following C18-C1 Claisen cyclization and release of the C9-hydroxyl version of TAN-1612 from the NRPKS adaA, two steps performed by the lactamase-like protein adaB. Finally, the O-methyltransferase adaD performs the C9 O-methylation to complete the biosynthesis of TAN-1612. In Aspergillus niger, this protein is O-methyltransferase adaD.